Consider the following 802-residue polypeptide: DSC E3 ubiquitin ligase complex subunit A (802 aa).

Positions 1-22 are cleaved as a signal peptide; it reads MDNRGSFFFLLIVFYLLLSSQS. The Lumenal portion of the chain corresponds to 23-381; the sequence is RPPLLDQDRE…TGPKIEEYDK (359 aa). 6 N-linked (GlcNAc...) asparagine glycosylation sites follow: N48, N71, N115, N126, N148, and N166. Residues 382-402 traverse the membrane as a helical segment; sequence YSARLVFIICGVFAAQITLLL. Over 403 to 429 the chain is Cytoplasmic; it reads RQIKEASTPSTRSRISFYTIALMAFGD. The helical transmembrane segment at 430–450 threads the bilayer; it reads AFVLIFILLELYPAVSFLVMA. Residues 451-453 lie on the Lumenal side of the membrane; it reads TAA. A helical transmembrane segment spans residues 454 to 474; sequence FLTFLSVSYIGMKFMMEIWAV. The Cytoplasmic segment spans residues 475-550; sequence QAPERREQER…QETRNDVGAM (76 aa). The interval 478–541 is disordered; the sequence is ERREQERRSN…TNRGTTSAAQ (64 aa). Over residues 532 to 541 the composition is skewed to polar residues; the sequence is TNRGTTSAAQ. Residues 551-571 traverse the membrane as a helical segment; the sequence is YARFYFVLFVMLIISIWSFLW. Residues 572 to 574 are Lumenal-facing; sequence PNR. Residues 575 to 595 traverse the membrane as a helical segment; that stretch reads LGALYARALAFVYLSFWTPQI. The Cytoplasmic portion of the chain corresponds to 596–608; that stretch reads GRNIIRNCRKALR. Residues 609-629 traverse the membrane as a helical segment; it reads WDFVIGQSILRLFPFVYFLTV. The Lumenal segment spans residues 630 to 642; that stretch reads RGNVLFIHPDTTT. A helical membrane pass occupies residues 643–663; it reads AFALAGWVWIQVWVLASQDIL. Residues 664–802 lie on the Cytoplasmic side of the membrane; sequence GPRFFVPRGW…PICRESIPPV (139 aa). Residues 732 to 796 form an RING-type; atypical zinc finger; the sequence is CAICMQEIEV…RLRLQCPICR (65 aa).

Component of the DSC E3 ubiquitin ligase complex composed of dscA, dscB, dscC and dscD.

It localises to the endoplasmic reticulum membrane. It carries out the reaction S-ubiquitinyl-[E2 ubiquitin-conjugating enzyme]-L-cysteine + [acceptor protein]-L-lysine = [E2 ubiquitin-conjugating enzyme]-L-cysteine + N(6)-ubiquitinyl-[acceptor protein]-L-lysine.. It functions in the pathway protein modification; protein ubiquitination. Catalytic component of the DSC E3 ubiquitin ligase complex which is required for the srbA transcriptional activator proteolytic cleavage to release the soluble transcription factor from the membrane in low oxygen or sterol conditions. Required for growth during hypoxia and triazole drug susceptibility, as well as for virulence in a murine model of invasive pulmonary aspergillosis (IPA). This is DSC E3 ubiquitin ligase complex subunit A from Aspergillus fumigatus (strain CBS 144.89 / FGSC A1163 / CEA10) (Neosartorya fumigata).